A 1354-amino-acid polypeptide reads, in one-letter code: Rho-associated protein kinase 1 (1354 aa).

At Ser2 the chain carries N-acetylserine. One can recognise a Protein kinase domain in the interval 76-338; the sequence is YEVVKVIGRG…VEEIKRHLFF (263 aa). ATP contacts are provided by residues 82–90 and Lys105; that span reads IGRGAFGEV. Catalysis depends on Asp198, which acts as the Proton acceptor. The region spanning 341 to 409 is the AGC-kinase C-terminal domain; it reads DQWAWETLRD…YSNRRYLSPA (69 aa). An interaction with FHOD1 region spans residues 368-727; sequence FDDLEEDKGD…KKLKEEREAR (360 aa). Residues 422–692 are a coiled coil; that stretch reads KSLQENLQKT…RLEQEVNEHK (271 aa). An REM-1 domain is found at 479 to 556; that stretch reads STVSQIEKEK…LEEANDLLRT (78 aa). The SHROOM3 binding stretch occupies residues 707–946; the sequence is EAKSVAMCEM…AVSRLEETNS (240 aa). Residues 949 to 1015 form the RhoBD domain; that stretch reads TKDIELLRKE…LAEIMNRKDF (67 aa). The tract at residues 998–1010 is RHOA binding; it reads LKTQAVNKLAEIM. The stretch at 1011 to 1102 forms a coiled coil; sequence NRKDFKIDKK…KLSDLSDSTS (92 aa). The segment at 1101 to 1120 is disordered; it reads TSVASFPSADETDPNLPESR. Phosphoserine is present on residues Ser1105 and Ser1108. An auto-inhibitory region spans residues 1115 to 1354; that stretch reads NLPESRIEGW…VVKNTSGKTS (240 aa). Residues 1118 to 1317 enclose the PH domain; that stretch reads ESRIEGWLSV…WVTHLVKKIP (200 aa). A Phorbol-ester/DAG-type zinc finger spans residues 1228 to 1283; the sequence is GHEFIPTLYHFPANCEACAKPLWHVFKPPPALECRRCHVKCHRDHLDKKEDLISPC. Ser1328 is subject to Phosphoserine. Residues 1333–1354 are disordered; it reads STRSTANQSFRKVVKNTSGKTS.

The protein belongs to the protein kinase superfamily. AGC Ser/Thr protein kinase family. As to quaternary structure, homodimer. Interacts with RHOA (activated by GTP), RHOB, RHOC, GEM, MYLC2B, RHOE, PPP1R12A, LIMK1, LIMK2, TSG101, CHORDC1, DAPK3, PFN1, PTEN and JIP3. Interacts with FHOD1 in a Src-dependent manner. Interacts with ITGB1BP1 (via N-terminus and PTB domain). Interacts with SHROOM3. Mg(2+) is required as a cofactor. In terms of processing, autophosphorylated on serine and threonine residues. Cleaved by caspase-3 during apoptosis. This leads to constitutive activation of the kinase and membrane blebbing. Detected in corneal epithelium.

It localises to the cytoplasm. Its subcellular location is the cytoskeleton. The protein resides in the microtubule organizing center. It is found in the centrosome. The protein localises to the centriole. It localises to the golgi apparatus membrane. Its subcellular location is the cell projection. The protein resides in the bleb. It is found in the cell membrane. The protein localises to the lamellipodium. It localises to the ruffle. The enzyme catalyses L-seryl-[protein] + ATP = O-phospho-L-seryl-[protein] + ADP + H(+). It catalyses the reaction L-threonyl-[protein] + ATP = O-phospho-L-threonyl-[protein] + ADP + H(+). Activated by RHOA binding. Inhibited by Y-27632. In terms of biological role, protein kinase which is a key regulator of the actin cytoskeleton and cell polarity. Involved in regulation of smooth muscle contraction, actin cytoskeleton organization, stress fiber and focal adhesion formation, neurite retraction, cell adhesion and motility via phosphorylation of DAPK3, GFAP, LIMK1, LIMK2, MYL9/MLC2, TPPP, PFN1 and PPP1R12A. Phosphorylates FHOD1 and acts synergistically with it to promote SRC-dependent non-apoptotic plasma membrane blebbing. Phosphorylates JIP3 and regulates the recruitment of JNK to JIP3 upon UVB-induced stress. Acts as a suppressor of inflammatory cell migration by regulating PTEN phosphorylation and stability. Acts as a negative regulator of VEGF-induced angiogenic endothelial cell activation. Required for centrosome positioning and centrosome-dependent exit from mitosis. Plays a role in terminal erythroid differentiation. Inhibits podocyte motility via regulation of actin cytoskeletal dynamics and phosphorylation of CFL1. Promotes keratinocyte terminal differentiation. Involved in osteoblast compaction through the fibronectin fibrillogenesis cell-mediated matrix assembly process, essential for osteoblast mineralization. May regulate closure of the eyelids and ventral body wall by inducing the assembly of actomyosin bundles. The sequence is that of Rho-associated protein kinase 1 (ROCK1) from Oryctolagus cuniculus (Rabbit).